We begin with the raw amino-acid sequence, 131 residues long: Protein FAM107B (131 aa).

Ala-2 carries the N-acetylalanine modification. Disordered stretches follow at residues 39–78 (MNQK…KKKS) and 100–131 (KLQE…AQES). Lys-50 carries the post-translational modification N6-acetyllysine. Positions 52–78 (ELQKVMEKRRRDQVIKQKEEEAQKKKS) are enriched in basic and acidic residues. Residues 61-112 (RRDQVIKQKEEEAQKKKSDLEIELLKRQQKLEQLELEKQKLQEEQENAPEFV) are a coiled coil.

Belongs to the FAM107 family.

This is Protein FAM107B from Rattus norvegicus (Rat).